A 286-amino-acid polypeptide reads, in one-letter code: Light-independent protochlorophyllide reductase iron-sulfur ATP-binding protein (286 aa).

ATP is bound by residues 10-15 and lysine 39; that span reads GIGKST. A Mg(2+)-binding site is contributed by serine 14. Positions 95 and 129 each coordinate [4Fe-4S] cluster. 180–181 lines the ATP pocket; that stretch reads NR.

Belongs to the NifH/BchL/ChlL family. Homodimer. Protochlorophyllide reductase is composed of three subunits; ChlL, ChlN and ChlB. [4Fe-4S] cluster serves as cofactor.

It catalyses the reaction chlorophyllide a + oxidized 2[4Fe-4S]-[ferredoxin] + 2 ADP + 2 phosphate = protochlorophyllide a + reduced 2[4Fe-4S]-[ferredoxin] + 2 ATP + 2 H2O. The protein operates within porphyrin-containing compound metabolism; chlorophyll biosynthesis (light-independent). Functionally, component of the dark-operative protochlorophyllide reductase (DPOR) that uses Mg-ATP and reduced ferredoxin to reduce ring D of protochlorophyllide (Pchlide) to form chlorophyllide a (Chlide). This reaction is light-independent. The L component serves as a unique electron donor to the NB-component of the complex, and binds Mg-ATP. In Synechococcus elongatus (strain ATCC 33912 / PCC 7942 / FACHB-805) (Anacystis nidulans R2), this protein is Light-independent protochlorophyllide reductase iron-sulfur ATP-binding protein.